Reading from the N-terminus, the 320-residue chain is Calnexin-independence factor 1 (320 aa).

Residues 16-36 form a disordered region; the sequence is SAETSVGEKQPKRKRSEVRAE.

The protein localises to the nucleus. Its subcellular location is the nucleolus. Functionally, induces a stably inheritable state of calnexin independence called the Cin state when overexpressed. This Schizosaccharomyces pombe (strain 972 / ATCC 24843) (Fission yeast) protein is Calnexin-independence factor 1 (cif1).